A 628-amino-acid chain; its full sequence is Propionate--CoA ligase (628 aa).

This sequence belongs to the ATP-dependent AMP-binding enzyme family.

The enzyme catalyses propanoate + ATP + CoA = propanoyl-CoA + AMP + diphosphate. It functions in the pathway organic acid metabolism; propanoate degradation. Functionally, catalyzes the synthesis of propionyl-CoA from propionate and CoA. Also converts acetate to acetyl-CoA but with a lower specific activity. This chain is Propionate--CoA ligase (prpE), found in Salmonella typhimurium (strain LT2 / SGSC1412 / ATCC 700720).